Reading from the N-terminus, the 37-residue chain is Rugosin-C (37 aa).

A disulfide bridge connects residues Cys31 and Cys37.

This sequence belongs to the frog skin active peptide (FSAP) family. Brevinin subfamily. As to expression, expressed by the skin glands.

It is found in the secreted. Has antibacterial activity against Gram-positive bacteria. The chain is Rugosin-C from Glandirana rugosa (Japanese wrinkled frog).